The following is a 123-amino-acid chain: Small ribosomal subunit protein uS12cz/uS12cy (123 aa).

Belongs to the universal ribosomal protein uS12 family. Part of the 30S ribosomal subunit.

It localises to the plastid. The protein resides in the chloroplast. Functionally, with S4 and S5 plays an important role in translational accuracy. Located at the interface of the 30S and 50S subunits. This Phaseolus vulgaris (Kidney bean) protein is Small ribosomal subunit protein uS12cz/uS12cy (rps12-A).